We begin with the raw amino-acid sequence, 349 residues long: Nicotinate-nucleotide--dimethylbenzimidazole phosphoribosyltransferase (349 aa).

Glu-315 functions as the Proton acceptor in the catalytic mechanism.

It belongs to the CobT family.

The enzyme catalyses 5,6-dimethylbenzimidazole + nicotinate beta-D-ribonucleotide = alpha-ribazole 5'-phosphate + nicotinate + H(+). The protein operates within nucleoside biosynthesis; alpha-ribazole biosynthesis; alpha-ribazole from 5,6-dimethylbenzimidazole: step 1/2. Functionally, catalyzes the synthesis of alpha-ribazole-5'-phosphate from nicotinate mononucleotide (NAMN) and 5,6-dimethylbenzimidazole (DMB). In Variovorax paradoxus (strain S110), this protein is Nicotinate-nucleotide--dimethylbenzimidazole phosphoribosyltransferase.